Reading from the N-terminus, the 304-residue chain is uncharacterized protein (304 aa).

Residues 1 to 183 (MTAPNEPGAL…ARVQLSARRS (183 aa)) form a disordered region. The span at 132 to 166 (PTPRAPQRNPAPARPAEGGAGSRGDSAAGSSGGRS) shows a compositional bias: low complexity. Transmembrane regions (helical) follow at residues 206 to 226 (LLLS…LYLV) and 265 to 285 (FLIG…GAFV).

This sequence to M.leprae ML0007.

It is found in the cell membrane. This is an uncharacterized protein from Mycobacterium tuberculosis (strain ATCC 25618 / H37Rv).